Consider the following 479-residue polypeptide: Cardiolipin synthase A (479 aa).

2 consecutive transmembrane segments (helical) span residues 8–28 and 38–58; these read FFGY…IHAL and IAWA…YLVF. 2 consecutive PLD phosphodiesterase domains span residues 218-245 and 392-419; these read INFR…GDEY and EPGF…DNRS. Catalysis depends on residues His223, Lys225, Asp230, His397, Lys399, and Asp404.

This sequence belongs to the phospholipase D family. Cardiolipin synthase subfamily. ClsA sub-subfamily.

The protein localises to the cell inner membrane. It catalyses the reaction 2 a 1,2-diacyl-sn-glycero-3-phospho-(1'-sn-glycerol) = a cardiolipin + glycerol. In terms of biological role, catalyzes the reversible phosphatidyl group transfer from one phosphatidylglycerol molecule to another to form cardiolipin (CL) (diphosphatidylglycerol) and glycerol. This Pseudomonas syringae pv. syringae (strain B728a) protein is Cardiolipin synthase A.